Consider the following 228-residue polypeptide: Outer membrane protein assembly factor BamE (228 aa).

The signal sequence occupies residues 1-29; it reads MNPILKGVYSPARLGVVALTLFGILGVTG. Residue cysteine 30 is the site of N-palmitoyl cysteine attachment. A lipid anchor (S-diacylglycerol cysteine) is attached at cysteine 30. Residues 197-228 form a disordered region; it reads DFFGSSKKDPDPQSPQLGPGTLNDVPKPADSK.

This sequence belongs to the BamE family. Part of the Bam complex.

The protein localises to the cell outer membrane. In terms of biological role, part of the outer membrane protein assembly complex, which is involved in assembly and insertion of beta-barrel proteins into the outer membrane. In Polynucleobacter necessarius subsp. necessarius (strain STIR1), this protein is Outer membrane protein assembly factor BamE.